We begin with the raw amino-acid sequence, 259 residues long: Phosphoribosylaminoimidazole-succinocarboxamide synthase (259 aa).

Belongs to the SAICAR synthetase family.

The enzyme catalyses 5-amino-1-(5-phospho-D-ribosyl)imidazole-4-carboxylate + L-aspartate + ATP = (2S)-2-[5-amino-1-(5-phospho-beta-D-ribosyl)imidazole-4-carboxamido]succinate + ADP + phosphate + 2 H(+). The protein operates within purine metabolism; IMP biosynthesis via de novo pathway; 5-amino-1-(5-phospho-D-ribosyl)imidazole-4-carboxamide from 5-amino-1-(5-phospho-D-ribosyl)imidazole-4-carboxylate: step 1/2. The protein is Phosphoribosylaminoimidazole-succinocarboxamide synthase of Hyphomonas neptunium (strain ATCC 15444).